Here is a 305-residue protein sequence, read N- to C-terminus: Glycine cleavage system transcriptional activator (305 aa).

The HTH lysR-type domain occupies 6–63; it reads PPLNALRVFDAAARHLSFTRAAEELFVTQAAVSHQIKSLEDFLGLKLFRRRNRSLLLT. The H-T-H motif DNA-binding region spans 23–42; the sequence is FTRAAEELFVTQAAVSHQIK.

This sequence belongs to the LysR transcriptional regulatory family.

It localises to the cytoplasm. Regulatory protein for the glycine cleavage system operon (gcv). Mediates activation of gcv by glycine and repression by purines. GcvA is negatively autoregulated. Binds to three sites upstream of the gcv promoter. The protein is Glycine cleavage system transcriptional activator (gcvA) of Escherichia coli O157:H7.